Reading from the N-terminus, the 175-residue chain is Alpha-crystallin B chain (175 aa).

The residue at position 1 (Met1) is an N-acetylmethionine. Ser19 is modified (phosphoserine). Ser41 is a glycosylation site (O-linked (GlcNAc) serine). 2 positions are modified to phosphoserine: Ser45 and Ser59. A sHSP domain is found at 56–164 (RAPSWFDTGL…PERTIPITRE (109 aa)). His83 serves as a coordination point for Zn(2+). Lys92 bears the N6-acetyllysine mark. Zn(2+) is bound by residues His104, Glu106, His111, and His119. The tract at residues 142–175 (VLTVNGPRKQVSGPERTIPITREEKPAVTAAPKK) is disordered. Lys166 carries the post-translational modification N6-acetyllysine. Thr170 carries an O-linked (GlcNAc) threonine glycan.

It belongs to the small heat shock protein (HSP20) family. Heteromer composed of three CRYAA and one CRYAB subunits. Aggregates with homologous proteins, including the small heat shock protein HSPB1, to form large heteromeric complexes. Inter-subunit bridging via zinc ions enhances stability, which is crucial as there is no protein turn over in the lens. Interacts with HSPBAP1 and TTN/titin. Interacts with TMEM109; in the cellular response to DNA damage. Interacts with DES; binds rapidly during early stages of DES filament assembly and a reduced binding seen in the later stages. Interacts with TMED10; the interaction mediates the translocation from the cytoplasm into the ERGIC (endoplasmic reticulum-Golgi intermediate compartment) and thereby secretion. Interacts with ATP6V1A and with MTOR, forming a ternary complex.

It is found in the cytoplasm. Its subcellular location is the nucleus. The protein resides in the secreted. It localises to the lysosome. Its function is as follows. May contribute to the transparency and refractive index of the lens. Has chaperone-like activity, preventing aggregation of various proteins under a wide range of stress conditions. In lens epithelial cells, stabilizes the ATP6V1A protein, preventing its degradation by the proteasome. This is Alpha-crystallin B chain (CRYAB) from Macaca fascicularis (Crab-eating macaque).